Here is a 373-residue protein sequence, read N- to C-terminus: Arfaptin-1 (373 aa).

Positions 1-47 are disordered; it reads MAQESPKNSAAEIPVTSNGEVDDAHEHGYNRDLKHSLPSGLGLSETQ. The residue at position 2 (alanine 2) is an N-acetylalanine. Serine 5 bears the Phosphoserine mark. The segment covering 22-35 has biased composition (basic and acidic residues); sequence DDAHEHGYNRDLKH. Serine 36, serine 39, serine 69, serine 79, and serine 132 each carry phosphoserine. The AH domain occupies 153–353; sequence TVDLELEAQI…NQKQLELTLK (201 aa). Phosphothreonine is present on threonine 361.

As to quaternary structure, forms homodimers or heterodimers with ARFIP2. Interacts with non-myristoylated GTP-bound ARF3, but not to GDP-bound ARF3. Interacts with ARF1. Binds with lower affinity to ARF5 and with very little affinity to ARF6. Interacts with ARL1. Interacts with ATG9A. Phosphorylated by PRKD1; phosphorylation delocalizes ARFIP1 from the Golgi and disrupts its ability to inhibit the activity of ADP-ribosylation factor, an important component of the vesicle scission machinery.

It localises to the golgi apparatus. The protein localises to the trans-Golgi network membrane. Its function is as follows. Plays a role in controlling biogenesis of secretory granules at the trans-Golgi network. Mechanistically, binds ARF-GTP at the neck of a growing secretory granule precursor and forms a protective scaffold. Once the granule precursor has been completely loaded, active PRKD1 phosphorylates ARFIP1 and releases it from ARFs. In turn, ARFs induce fission. Through this mechanism, ensures proper secretory granule formation at the Golgi of pancreatic beta cells. This is Arfaptin-1 from Mus musculus (Mouse).